Here is a 161-residue protein sequence, read N- to C-terminus: Allophycocyanin beta chain (161 aa).

N71 is subject to N4-methylasparagine. C81 contacts (2R,3E)-phycocyanobilin.

Belongs to the phycobiliprotein family. Heterodimer of an alpha and a beta chain. Contains one covalently linked phycocyanobilin chromophore.

The protein localises to the cellular thylakoid membrane. Its function is as follows. Light-harvesting photosynthetic bile pigment-protein from the phycobiliprotein complex. Allophycocyanin has a maximum absorption at approximately 650 nanometers. The protein is Allophycocyanin beta chain (apcB) of Synechocystis sp. (strain ATCC 27184 / PCC 6803 / Kazusa).